Consider the following 516-residue polypeptide: 2-isopropylmalate synthase (516 aa).

The region spanning I10–A271 is the Pyruvate carboxyltransferase domain. Mn(2+) is bound by residues D19, H205, H207, and N241. Residues E396 to P516 are regulatory domain.

It belongs to the alpha-IPM synthase/homocitrate synthase family. LeuA type 1 subfamily. In terms of assembly, homodimer. Mn(2+) is required as a cofactor.

The protein resides in the cytoplasm. The catalysed reaction is 3-methyl-2-oxobutanoate + acetyl-CoA + H2O = (2S)-2-isopropylmalate + CoA + H(+). It functions in the pathway amino-acid biosynthesis; L-leucine biosynthesis; L-leucine from 3-methyl-2-oxobutanoate: step 1/4. Its function is as follows. Catalyzes the condensation of the acetyl group of acetyl-CoA with 3-methyl-2-oxobutanoate (2-ketoisovalerate) to form 3-carboxy-3-hydroxy-4-methylpentanoate (2-isopropylmalate). The sequence is that of 2-isopropylmalate synthase from Acidimicrobium ferrooxidans (strain DSM 10331 / JCM 15462 / NBRC 103882 / ICP).